The chain runs to 214 residues: Outer-membrane lipoprotein LolB (214 aa).

An N-terminal signal peptide occupies residues M1–G30. C31 is lipidated: N-palmitoyl cysteine. C31 is lipidated: S-diacylglycerol cysteine.

This sequence belongs to the LolB family. As to quaternary structure, monomer.

It localises to the cell outer membrane. Its function is as follows. Plays a critical role in the incorporation of lipoproteins in the outer membrane after they are released by the LolA protein. This Chromohalobacter salexigens (strain ATCC BAA-138 / DSM 3043 / CIP 106854 / NCIMB 13768 / 1H11) protein is Outer-membrane lipoprotein LolB.